A 644-amino-acid polypeptide reads, in one-letter code: MGTVSLAVQLFIVFLLTSYLLNKYSTIRKQNPIVTISTFIGWYFSLIIVFVLPLDVAITFFHKCENDRQRVLNTTSTPAPIVPECELPGGYVPDDVLFDLWRVVYWSAQILTWLILPLLQSYVTAGNFTIFGKIRAAVINNTVYYAIYSLCFLAILIYAMFKGVSINIENLKVILVSASNTWGLFLLVVLLGHGLVELPRSLWHHGNRHYRLRKTYFDIEKLASEKSEAEENVKEIYKKVRVLFNSMKNDQNGQRRKVRTILSKFSDDVIDQLFPSRQVIDNASMEEIGDYCSEAKLINLHKKTIYAVQTLNNATAQWKVLVDRALFLENLAFSESNGYNLDLARNICVPVGVRRFWYTRLQTPFCRVLGVVTVFMTFFVLFSECTFFVVSYTVSPAAFVTEYASNRFHYKYTQFVAFGIIVYLITCAYFTIFRLQIYKYYHLDPNGHTDENSILFSAILLCRLTPPICLNFLGMIHMDSHVSMAKSFGVETQFTKLMGHLDVIPILAKGINIYLPICIILLCAIHYYRVGAYVLHNIGFDQFVESDEMTNDMINSGRSLVQIERNSIKRSNERNQRNQSWTNTITSNTSTTSNAVNKYKRSRKNEEERPMLEEEEEMEEVSSTTRISLSPTEHPSSSGFFDDM.

The Extracellular portion of the chain corresponds to 1 to 4 (MGTV). Residues 5–27 (SLAVQLFIVFLLTSYLLNKYSTI) form a helical membrane-spanning segment. Residues 28-31 (RKQN) lie on the Cytoplasmic side of the membrane. The helical transmembrane segment at 32-52 (PIVTISTFIGWYFSLIIVFVL) threads the bilayer. The Extracellular portion of the chain corresponds to 53-102 (PLDVAITFFHKCENDRQRVLNTTSTPAPIVPECELPGGYVPDDVLFDLWR). An N-linked (GlcNAc...) asparagine glycan is attached at N73. The chain crosses the membrane as a helical span at residues 103 to 123 (VVYWSAQILTWLILPLLQSYV). Topologically, residues 124 to 145 (TAGNFTIFGKIRAAVINNTVYY) are cytoplasmic. A helical transmembrane segment spans residues 146–166 (AIYSLCFLAILIYAMFKGVSI). Residues 167-172 (NIENLK) lie on the Extracellular side of the membrane. A helical transmembrane segment spans residues 173 to 193 (VILVSASNTWGLFLLVVLLGH). Residues 194-369 (GLVELPRSLW…RLQTPFCRVL (176 aa)) lie on the Cytoplasmic side of the membrane. The stretch at 216–245 (YFDIEKLASEKSEAEENVKEIYKKVRVLFN) forms a coiled coil. A helical membrane pass occupies residues 370–390 (GVVTVFMTFFVLFSECTFFVV). Residues 391–412 (SYTVSPAAFVTEYASNRFHYKY) are Extracellular-facing. A helical transmembrane segment spans residues 413–433 (TQFVAFGIIVYLITCAYFTIF). Topologically, residues 434–453 (RLQIYKYYHLDPNGHTDENS) are cytoplasmic. A helical membrane pass occupies residues 454–474 (ILFSAILLCRLTPPICLNFLG). Over 475–502 (MIHMDSHVSMAKSFGVETQFTKLMGHLD) the chain is Extracellular. Residues 503–523 (VIPILAKGINIYLPICIILLC) form a helical membrane-spanning segment. Residues 524 to 644 (AIHYYRVGAY…PSSSGFFDDM (121 aa)) lie on the Cytoplasmic side of the membrane. Positions 567–576 (SIKRSNERNQ) are enriched in basic and acidic residues. The disordered stretch occupies residues 567-644 (SIKRSNERNQ…PSSSGFFDDM (78 aa)). The segment covering 578-594 (NQSWTNTITSNTSTTSN) has biased composition (low complexity). The span at 621–644 (VSSTTRISLSPTEHPSSSGFFDDM) shows a compositional bias: polar residues.

This sequence belongs to the LIMR family.

Its subcellular location is the cell membrane. Functionally, may associate with G-protein coupled receptors and regulate downstream signaling pathways. The polypeptide is G-protein coupled receptor-associated protein LMBRD2 (Caenorhabditis briggsae).